A 315-amino-acid polypeptide reads, in one-letter code: Methenyltetrahydromethanopterin cyclohydrolase (315 aa).

The protein belongs to the MCH family.

The protein resides in the cytoplasm. The catalysed reaction is 5,10-methenyl-5,6,7,8-tetrahydromethanopterin + H2O = N(5)-formyl-5,6,7,8-tetrahydromethanopterin + H(+). It participates in one-carbon metabolism; methanogenesis from CO(2); 5,10-methenyl-5,6,7,8-tetrahydromethanopterin from CO(2): step 3/3. Catalyzes the reversible interconversion of 5-formyl-H(4)MPT to methenyl-H(4)MPT(+). This chain is Methenyltetrahydromethanopterin cyclohydrolase, found in Methanospirillum hungatei JF-1 (strain ATCC 27890 / DSM 864 / NBRC 100397 / JF-1).